Consider the following 463-residue polypeptide: L-seryl-tRNA(Sec) selenium transferase (463 aa).

Lys-295 carries the N6-(pyridoxal phosphate)lysine modification.

Belongs to the SelA family. In terms of assembly, homodecamer; pentamer of dimers. Binds only one seryl-tRNA(Sec) per dimer. The cofactor is pyridoxal 5'-phosphate.

The protein resides in the cytoplasm. It carries out the reaction L-seryl-tRNA(Sec) + selenophosphate + H(+) = L-selenocysteinyl-tRNA(Sec) + phosphate. It functions in the pathway aminoacyl-tRNA biosynthesis; selenocysteinyl-tRNA(Sec) biosynthesis; selenocysteinyl-tRNA(Sec) from L-seryl-tRNA(Sec) (bacterial route): step 1/1. Functionally, converts seryl-tRNA(Sec) to selenocysteinyl-tRNA(Sec) required for selenoprotein biosynthesis. This chain is L-seryl-tRNA(Sec) selenium transferase, found in Proteus mirabilis (strain HI4320).